The sequence spans 371 residues: Leu/Ile/Val-binding protein homolog 1 (371 aa).

An N-terminal signal peptide occupies residues 1 to 23; it reads MRKTLFSGVALAAVIAFGGSAWA.

This sequence belongs to the leucine-binding protein family.

Functionally, component of an amino-acid transport system. In Brucella abortus (strain 2308), this protein is Leu/Ile/Val-binding protein homolog 1.